We begin with the raw amino-acid sequence, 552 residues long: DNA ligase (552 aa).

Glu229 provides a ligand contact to ATP. Lys231 acts as the N6-AMP-lysine intermediate in catalysis. The ATP site is built by Arg236 and Glu283. Glu283 and Glu377 together coordinate Mg(2+). ATP contacts are provided by Lys382 and Lys397.

The protein belongs to the ATP-dependent DNA ligase family. Interacts with host TOP2A and TOP2B. It depends on Mg(2+) as a cofactor.

Its subcellular location is the host cytoplasm. The catalysed reaction is ATP + (deoxyribonucleotide)n-3'-hydroxyl + 5'-phospho-(deoxyribonucleotide)m = (deoxyribonucleotide)n+m + AMP + diphosphate.. DNA ligase that seals nicks in double-stranded DNA during DNA replication, DNA recombination and DNA repair. Recruits cellular topoisomerase II to sites of viral replication and assembly. The chain is DNA ligase (OPG180) from Vaccinia virus (strain Ankara) (VACV).